Here is a 251-residue protein sequence, read N- to C-terminus: DNA-directed RNA polymerase III subunit RPC7 (251 aa).

The interval 186 to 251 (DDASTGDGAA…EEDPNEEAAF (66 aa)) is disordered. Position 189 is a phosphoserine (S189). 2 stretches are compositionally biased toward acidic residues: residues 203 to 225 (GEDDDLADDDFEEDEDEEDDDDY) and 234 to 251 (GDDDDYGDEEDPNEEAAF).

It belongs to the eukaryotic RPC7 RNA polymerase subunit family. As to quaternary structure, component of the RNA polymerase III (Pol III) complex consisting of 17 subunits.

The protein localises to the nucleus. In terms of biological role, DNA-dependent RNA polymerase catalyzes the transcription of DNA into RNA using the four ribonucleoside triphosphates as substrates. Specific peripheric component of RNA polymerase III which synthesizes small RNAs, such as 5S rRNA and tRNAs. C31 is involved in the formation of the initiation complex. The polypeptide is DNA-directed RNA polymerase III subunit RPC7 (RPC31) (Saccharomyces cerevisiae (strain ATCC 204508 / S288c) (Baker's yeast)).